The chain runs to 410 residues: Retrovirus-related Pol polyprotein from type-1 retrotransposable element R1 2 (410 aa).

One can recognise a Reverse transcriptase domain in the interval 1–118 (GCPQGSIGGP…SCFRYLGVNV (118 aa)). Positions 254 to 410 (SSVIKLERLV…RLNLELDVNG (157 aa)) are nucleic acid-binding endonuclease.

The enzyme catalyses DNA(n) + a 2'-deoxyribonucleoside 5'-triphosphate = DNA(n+1) + diphosphate. The protein is Retrovirus-related Pol polyprotein from type-1 retrotransposable element R1 2 of Nasonia vitripennis (Parasitic wasp).